The following is a 229-amino-acid chain: Cytochrome b translational activator protein CBS1, mitochondrial (229 aa).

The N-terminal 25 residues, 1–25 (MLRTKVFATTVARISGIRRYIPIRT), are a transit peptide targeting the mitochondrion.

It is found in the mitochondrion inner membrane. Its function is as follows. mRNA-specific translational activator of cytochrome b. The cytochrome b (COB) leader RNA may represent the target sequence for CBS1 and CBS2, tethering the COB mRNA to the inner mitochondrial membrane, where cotranslational insertion of cytochrome b into the membrane can occur. This is Cytochrome b translational activator protein CBS1, mitochondrial (CBS1) from Saccharomyces cerevisiae (strain ATCC 204508 / S288c) (Baker's yeast).